Reading from the N-terminus, the 147-residue chain is MASRRLLLLCLAGLVLVTEAGPTGTGQSKCPLMVKVLDAVQGSPAVNVAVRVFKKAADETWEPFASGKTSEFGELHGLTTDEKFVEGIIKVELDTKTYWKALGISPFHEYVEVVFHANDSGKRRYTIAALLSPYSYSTTALVSDPKE.

Positions 1 to 20 are cleaved as a signal peptide; sequence MASRRLLLLCLAGLVLVTEA. Sulfocysteine is present on cysteine 30. Lysine 35 serves as a coordination point for L-thyroxine. The residue at position 62 (glutamate 62) is a 4-carboxyglutamate. Glutamate 74 contributes to the L-thyroxine binding site. A glycan (N-linked (GlcNAc...) asparagine) is linked at asparagine 118. Serine 137 lines the L-thyroxine pocket.

The protein belongs to the transthyretin family. Homotetramer. Dimer of dimers. In the homotetramer, subunits assemble around a central channel that can accommodate two ligand molecules. Interacts with RBP4. In terms of processing, sulfonation of the reactive cysteine Cys-30 enhances the stability of the native conformation of TTR, avoiding misassembly of the protein leading to amyloid formation. Detected in serum (at protein level). Detected in liver.

The protein resides in the secreted. Functionally, thyroid hormone-binding protein. Probably transports thyroxine from the bloodstream to the brain. In Sorex araneus (Eurasian common shrew), this protein is Transthyretin (TTR).